We begin with the raw amino-acid sequence, 1150 residues long: ATP-dependent helicase/deoxyribonuclease subunit B (1150 aa).

ATP is bound at residue 8–15 (GRSGSGKS). Residues C789, C1108, C1111, and C1117 each coordinate [4Fe-4S] cluster.

Belongs to the helicase family. AddB/RexB type 1 subfamily. In terms of assembly, heterodimer of AddA and AddB. It depends on Mg(2+) as a cofactor. Requires [4Fe-4S] cluster as cofactor.

The heterodimer acts as both an ATP-dependent DNA helicase and an ATP-dependent, dual-direction single-stranded exonuclease. Recognizes the chi site generating a DNA molecule suitable for the initiation of homologous recombination. The AddB subunit has 5' -&gt; 3' nuclease activity but not helicase activity. This chain is ATP-dependent helicase/deoxyribonuclease subunit B, found in Clostridium tetani (strain Massachusetts / E88).